The primary structure comprises 72 residues: Translation initiation factor IF-1 2 (72 aa).

Positions 1-72 constitute an S1-like domain; it reads MAKEDVIEMQ…TKGRIVFRTK (72 aa).

This sequence belongs to the IF-1 family. In terms of assembly, component of the 30S ribosomal translation pre-initiation complex which assembles on the 30S ribosome in the order IF-2 and IF-3, IF-1 and N-formylmethionyl-tRNA(fMet); mRNA recruitment can occur at any time during PIC assembly.

It localises to the cytoplasm. Its function is as follows. One of the essential components for the initiation of protein synthesis. Stabilizes the binding of IF-2 and IF-3 on the 30S subunit to which N-formylmethionyl-tRNA(fMet) subsequently binds. Helps modulate mRNA selection, yielding the 30S pre-initiation complex (PIC). Upon addition of the 50S ribosomal subunit IF-1, IF-2 and IF-3 are released leaving the mature 70S translation initiation complex. This is Translation initiation factor IF-1 2 from Azoarcus sp. (strain BH72).